The sequence spans 293 residues: Ribosomal protein L11 methyltransferase (293 aa).

Positions 145, 166, 188, and 230 each coordinate S-adenosyl-L-methionine.

This sequence belongs to the methyltransferase superfamily. PrmA family.

It localises to the cytoplasm. The enzyme catalyses L-lysyl-[protein] + 3 S-adenosyl-L-methionine = N(6),N(6),N(6)-trimethyl-L-lysyl-[protein] + 3 S-adenosyl-L-homocysteine + 3 H(+). In terms of biological role, methylates ribosomal protein L11. The chain is Ribosomal protein L11 methyltransferase from Enterobacter sp. (strain 638).